The chain runs to 499 residues: UDP-N-acetylmuramoylalanine--D-glutamate ligase (499 aa).

Position 120-126 (G120–T126) interacts with ATP.

Belongs to the MurCDEF family.

It is found in the cytoplasm. It carries out the reaction UDP-N-acetyl-alpha-D-muramoyl-L-alanine + D-glutamate + ATP = UDP-N-acetyl-alpha-D-muramoyl-L-alanyl-D-glutamate + ADP + phosphate + H(+). The protein operates within cell wall biogenesis; peptidoglycan biosynthesis. Functionally, cell wall formation. Catalyzes the addition of glutamate to the nucleotide precursor UDP-N-acetylmuramoyl-L-alanine (UMA). The protein is UDP-N-acetylmuramoylalanine--D-glutamate ligase of Nostoc punctiforme (strain ATCC 29133 / PCC 73102).